Here is a 564-residue protein sequence, read N- to C-terminus: Lamassu protein LmuB (564 aa).

Functionally, component of antiviral defense system Lamassu type II, composed of LmuA and LmuB. Expression of Lamassu type II in B.subtilis (strain BEST7003) confers resistance to phage SpBeta. May be an ATPase. This Bacillus cereus (strain VD014) protein is Lamassu protein LmuB.